A 499-amino-acid chain; its full sequence is Cobyric acid synthase (499 aa).

Residues 266 to 449 (RLEIAVVRLP…LHGLFDNHLW (184 aa)) enclose the GATase cobBQ-type domain. Cys344 functions as the Nucleophile in the catalytic mechanism. Residue His441 is part of the active site.

The protein belongs to the CobB/CobQ family. CobQ subfamily.

Its pathway is cofactor biosynthesis; adenosylcobalamin biosynthesis. Its function is as follows. Catalyzes amidations at positions B, D, E, and G on adenosylcobyrinic A,C-diamide. NH(2) groups are provided by glutamine, and one molecule of ATP is hydrogenolyzed for each amidation. In Synechococcus sp. (strain JA-2-3B'a(2-13)) (Cyanobacteria bacterium Yellowstone B-Prime), this protein is Cobyric acid synthase.